A 471-amino-acid chain; its full sequence is Eukaryotic translation initiation factor 3 subunit M (471 aa).

Residues 39–61 (EISSLLEPLRQQEQSEEEPDRKQ) are disordered. A PCI domain is found at 206–377 (DFELAQSHVV…SEFLVHRATY (172 aa)). The tract at residues 419–471 (QAATEEANQGKSGEKGGKGGDRRRNPQHQQQQQQSQPSQPQQPRETELVAGAE) is disordered. The segment covering 430-442 (SGEKGGKGGDRRR) has biased composition (basic and acidic residues). Positions 445–461 (QHQQQQQQSQPSQPQQP) are enriched in low complexity.

It belongs to the eIF-3 subunit M family. As to quaternary structure, component of the eukaryotic translation initiation factor 3 (eIF-3) complex.

The protein localises to the cytoplasm. Component of the eukaryotic translation initiation factor 3 (eIF-3) complex, which is involved in protein synthesis of a specialized repertoire of mRNAs and, together with other initiation factors, stimulates binding of mRNA and methionyl-tRNAi to the 40S ribosome. The eIF-3 complex specifically targets and initiates translation of a subset of mRNAs involved in cell proliferation. The sequence is that of Eukaryotic translation initiation factor 3 subunit M from Aspergillus clavatus (strain ATCC 1007 / CBS 513.65 / DSM 816 / NCTC 3887 / NRRL 1 / QM 1276 / 107).